Consider the following 181-residue polypeptide: Prepronociceptin (181 aa).

Positions 1–19 are cleaved as a signal peptide; that stretch reads MKILFCDVLLLSLLSSVFS. Positions 20–95 are excised as a propeptide; sequence SCPEDCLTCQ…QSKASEMQHL (76 aa). Positions 103-125 are disordered; it reads SVVQARDAEPEADAEPVADEADE. 2 consecutive repeat copies span residues 109–114 and 115–120. Residues 109–120 form a 2 X 6 AA tandem repeats of D-A-E-P-X-A region; the sequence is DAEPEADAEPVA. Residues 112–125 are compositionally biased toward acidic residues; that stretch reads PEADAEPVADEADE. A propeptide spanning residues 174-181 is cleaved from the precursor; sequence TLHQNGNV.

This sequence belongs to the opioid neuropeptide precursor family. Specific enzymatic cleavages at paired basic residues probably yield other active peptides besides nociceptin. Post-translationally, the N-terminal domain contains 6 conserved cysteines thought to be involved in disulfide bonding and/or processing. Expressed predominantly in the spinal cord and brain, being more abundant in the hypothalamus and striatum. Also found in small amounts in ovary.

The protein resides in the secreted. In terms of biological role, ligand of the opioid receptor-like receptor OPRL1. It may act as a transmitter in the brain by modulating nociceptive and locomotor behavior. May be involved in neuronal differentiation and development. Functionally, blocks nociceptin action in pain transmission by inhibiting nociceptin-induced hyperalgesia and allodynia. Has potent analgesic activity. The chain is Prepronociceptin (Pnoc) from Rattus norvegicus (Rat).